Consider the following 419-residue polypeptide: 3-isopropylmalate dehydratase large subunit (419 aa).

Positions 302, 362, and 365 each coordinate [4Fe-4S] cluster.

It belongs to the aconitase/IPM isomerase family. LeuC type 2 subfamily. As to quaternary structure, heterodimer of LeuC and LeuD. The cofactor is [4Fe-4S] cluster.

It catalyses the reaction (2R,3S)-3-isopropylmalate = (2S)-2-isopropylmalate. Its pathway is amino-acid biosynthesis; L-leucine biosynthesis; L-leucine from 3-methyl-2-oxobutanoate: step 2/4. Functionally, catalyzes the isomerization between 2-isopropylmalate and 3-isopropylmalate, via the formation of 2-isopropylmaleate. The polypeptide is 3-isopropylmalate dehydratase large subunit (Sulfurimonas denitrificans (strain ATCC 33889 / DSM 1251) (Thiomicrospira denitrificans (strain ATCC 33889 / DSM 1251))).